A 403-amino-acid chain; its full sequence is Phosphoglycerate kinase (403 aa).

Substrate-binding positions include 21–23, R36, 59–62, R119, and R159; these read DFN and HLGR. ATP is bound by residues K214, G301, E332, and 359 to 362; that span reads GGDS.

This sequence belongs to the phosphoglycerate kinase family. Monomer.

Its subcellular location is the cytoplasm. It catalyses the reaction (2R)-3-phosphoglycerate + ATP = (2R)-3-phospho-glyceroyl phosphate + ADP. Its pathway is carbohydrate degradation; glycolysis; pyruvate from D-glyceraldehyde 3-phosphate: step 2/5. This chain is Phosphoglycerate kinase, found in Lactobacillus johnsonii (strain CNCM I-12250 / La1 / NCC 533).